We begin with the raw amino-acid sequence, 37 residues long: Large ribosomal subunit protein bL36c (37 aa).

Belongs to the bacterial ribosomal protein bL36 family.

The protein localises to the plastid. The protein resides in the chloroplast. This chain is Large ribosomal subunit protein bL36c, found in Lotus japonicus (Lotus corniculatus var. japonicus).